The chain runs to 461 residues: Fumarate hydratase class II (461 aa).

Residues 97-99 (SGT), 127-130 (HPND), 137-139 (SSN), and threonine 185 each bind substrate. Histidine 186 serves as the catalytic Proton donor/acceptor. Serine 316 is an active-site residue. Residues serine 317 and 322 to 324 (KVN) each bind substrate.

The protein belongs to the class-II fumarase/aspartase family. Fumarase subfamily. As to quaternary structure, homotetramer.

Its subcellular location is the cytoplasm. The catalysed reaction is (S)-malate = fumarate + H2O. It functions in the pathway carbohydrate metabolism; tricarboxylic acid cycle; (S)-malate from fumarate: step 1/1. In terms of biological role, involved in the TCA cycle. Catalyzes the stereospecific interconversion of fumarate to L-malate. The chain is Fumarate hydratase class II from Staphylococcus aureus (strain MSSA476).